The sequence spans 527 residues: Rhesus-like glycoprotein A (527 aa).

Residues 1–18 are Cytoplasmic-facing; the sequence is MTHNDDDHKWVTTKRKEP. Residues 19–39 form a helical membrane-spanning segment; sequence IFFTVILFIFQIFMIICFAAL. At 40–70 the chain is on the extracellular side; that stretch reads TGYDTNKNYTGSENPDEFKGGEVQERVNNFY. N-linked (GlcNAc...) asparagine glycosylation is present at asparagine 47. The helical transmembrane segment at 71–91 threads the bilayer; that stretch reads GYFRDINIMIFFGFGFLMTFL. Residues 92–99 are Cytoplasmic-facing; it reads RRYGYSAL. Residues 100–120 traverse the membrane as a helical segment; that stretch reads GYTFIISALVSQWSVLLNGFF. Topologically, residues 121–141 are extracellular; sequence EAWSHSNKHGEFPSTWEFSMD. The helical transmembrane segment at 142–162 threads the bilayer; that stretch reads SLLQGFFCSGSVMISYGAILG. The Cytoplasmic portion of the chain corresponds to 163–166; sequence RVTP. The chain crosses the membrane as a helical span at residues 167-187; that stretch reads LHMLIMGIIEPIFFFLNVFIG. The Extracellular segment spans residues 188 to 195; that stretch reads EMNLEAID. The helical transmembrane segment at 196–216 threads the bilayer; the sequence is VGGGMYIHLFGSVFGLTVAWF. Over 217–236 the chain is Cytoplasmic; that stretch reads LTDRKSKECTDNAPSYSGDN. A helical membrane pass occupies residues 237–257; sequence FAMAGTLFLWMMWPSFNAAIA. The Extracellular portion of the chain corresponds to 258–263; sequence PLGEPQ. A helical membrane pass occupies residues 264–284; it reads FRAIANTFLSLTGSTVATFIV. Residues 285-299 lie on the Cytoplasmic side of the membrane; sequence SRLFSHLGNKLDMVH. A helical transmembrane segment spans residues 300–319; sequence VQNSSLAGGVVQGCIAHMNI. Residues 320–321 lie on the Extracellular side of the membrane; it reads NP. The chain crosses the membrane as a helical span at residues 322–342; that stretch reads GGAIAMGFIAGTISVCGYLFI. The Cytoplasmic portion of the chain corresponds to 343-357; it reads TPKVQRKLHIQDTCG. The helical transmembrane segment at 358-378 threads the bilayer; sequence ILNLHCIPGFLGSIAAIFAAI. The Extracellular portion of the chain corresponds to 379–406; that stretch reads KGLNNPNMYSKVEFEQIFRAGDSQASAN. The chain crosses the membrane as a helical span at residues 407–427; the sequence is LIATMVSIGLGIVGGLLVGVI. Residues 428 to 527 are Cytoplasmic-facing; sequence LLQLKKIKGL…EEDEFKQEPI (100 aa). Residues 471-527 are disordered; sequence SEDTAGGDDEEEGVGKEHGAVEMGKHNRIVQPKQDNKYHKQLPSDDEEEDEFKQEPI. Residues 483–495 are compositionally biased toward basic and acidic residues; it reads GVGKEHGAVEMGK. Residues 514–527 are compositionally biased toward acidic residues; the sequence is SDDEEEDEFKQEPI.

It belongs to the ammonium transporter (TC 2.A.49) family. Rh subfamily. In terms of assembly, interacts with ap1g1.

The protein resides in the contractile vacuole. It is found in the membrane. Functionally, may be a carbon dioxide/bicarbonate transporter. The polypeptide is Rhesus-like glycoprotein A (rhgA) (Dictyostelium discoideum (Social amoeba)).